The following is a 316-amino-acid chain: Ribosomal RNA small subunit methyltransferase H (316 aa).

S-adenosyl-L-methionine contacts are provided by residues Ala-35 to His-37, Asp-55, Phe-84, Asp-105, and Gln-112.

Belongs to the methyltransferase superfamily. RsmH family.

It localises to the cytoplasm. The enzyme catalyses cytidine(1402) in 16S rRNA + S-adenosyl-L-methionine = N(4)-methylcytidine(1402) in 16S rRNA + S-adenosyl-L-homocysteine + H(+). In terms of biological role, specifically methylates the N4 position of cytidine in position 1402 (C1402) of 16S rRNA. This is Ribosomal RNA small subunit methyltransferase H from Streptococcus pneumoniae (strain Hungary19A-6).